Reading from the N-terminus, the 321-residue chain is Serine protease 52 (321 aa).

The first 27 residues, 1–27 (MKRWKDRRTGLLLPLVLLLFGACSSLA), serve as a signal peptide directing secretion. The Peptidase S1 domain maps to 56–287 (IVGGKPANIL…YVRWISKQTA (232 aa)). The cysteines at positions 81 and 97 are disulfide-linked. Catalysis depends on charge relay system residues His96 and Asp142. The N-linked (GlcNAc...) asparagine glycan is linked to Asn153. Cystine bridges form between Cys175–Cys242, Cys208–Cys221, and Cys232–Cys263. Ser236 acts as the Charge relay system in catalysis. A helical membrane pass occupies residues 300-320 (ACPLVLSCRAILFLYFVMFLL).

Belongs to the peptidase S1 family.

The protein localises to the membrane. Probable serine protease. In Mus musculus (Mouse), this protein is Serine protease 52 (Prss52).